The following is a 265-amino-acid chain: Probable trehalose-phosphate phosphatase (265 aa).

The active-site Nucleophile is the D35. Residues D35, D37, and D213 each coordinate Mg(2+). Substrate is bound at residue 35–37 (DID).

It belongs to the trehalose phosphatase family. Mg(2+) serves as cofactor.

It catalyses the reaction alpha,alpha-trehalose 6-phosphate + H2O = alpha,alpha-trehalose + phosphate. It participates in glycan biosynthesis; trehalose biosynthesis. Functionally, removes the phosphate from trehalose 6-phosphate to produce free trehalose. The chain is Probable trehalose-phosphate phosphatase (otsB) from Sinorhizobium fredii (strain NBRC 101917 / NGR234).